Reading from the N-terminus, the 143-residue chain is Large ribosomal subunit protein uL11 (143 aa).

This sequence belongs to the universal ribosomal protein uL11 family. Part of the ribosomal stalk of the 50S ribosomal subunit. Interacts with L10 and the large rRNA to form the base of the stalk. L10 forms an elongated spine to which L12 dimers bind in a sequential fashion forming a multimeric L10(L12)X complex. Post-translationally, one or more lysine residues are methylated.

Functionally, forms part of the ribosomal stalk which helps the ribosome interact with GTP-bound translation factors. This chain is Large ribosomal subunit protein uL11, found in Polynucleobacter necessarius subsp. necessarius (strain STIR1).